Reading from the N-terminus, the 241-residue chain is MIRYKGFILFLLLMLIGCEQREELISNLSQRQANEIISVLERHNITARKVDGGKQGISVQVEKGTFASAVDLMRMYDLPNPERVDISQMFPTDSLVSSPRAEKARLYSAIEQRLEQSLVSIGGVISAKIHVSYDLEEKNISSKPMHISVIAIYDSPKESELLVSNIKRFLKNTFSDVKYENISVILTPKEEYVYTNVQPVKEIKSEFLTNEVIYLFLGMAVLVVILLVWAFKTGWFKRNKI.

The first 17 residues, 1–17 (MIRYKGFILFLLLMLIG), serve as a signal peptide directing secretion. Cys18 carries N-palmitoyl cysteine lipidation. Residue Cys18 is the site of S-diacylglycerol cysteine attachment.

The protein belongs to the YscJ lipoprotein family.

It localises to the cell outer membrane. Involved in the secretion of the Ipa antigens. This Shigella sonnei protein is Lipoprotein MxiJ (mxiJ).